The chain runs to 190 residues: Xanthine phosphoribosyltransferase 2 (190 aa).

Leu-20 and Asn-27 together coordinate xanthine. 129 to 133 (ANGCA) contributes to the 5-phospho-alpha-D-ribose 1-diphosphate binding site. Lys-157 is a binding site for xanthine.

It belongs to the purine/pyrimidine phosphoribosyltransferase family. Xpt subfamily. In terms of assembly, homodimer.

It is found in the cytoplasm. It catalyses the reaction XMP + diphosphate = xanthine + 5-phospho-alpha-D-ribose 1-diphosphate. Its pathway is purine metabolism; XMP biosynthesis via salvage pathway; XMP from xanthine: step 1/1. Functionally, converts the preformed base xanthine, a product of nucleic acid breakdown, to xanthosine 5'-monophosphate (XMP), so it can be reused for RNA or DNA synthesis. This is Xanthine phosphoribosyltransferase 2 from Clostridium botulinum (strain ATCC 19397 / Type A).